Here is a 440-residue protein sequence, read N- to C-terminus: Histidinol dehydrogenase (440 aa).

NAD(+)-binding residues include Y139, Q201, and N224. Residues S247, Q269, and H272 each coordinate substrate. Q269 and H272 together coordinate Zn(2+). Catalysis depends on proton acceptor residues E337 and H338. The substrate site is built by H338, D371, E425, and H430. A Zn(2+)-binding site is contributed by D371. H430 provides a ligand contact to Zn(2+).

The protein belongs to the histidinol dehydrogenase family. Zn(2+) is required as a cofactor.

The catalysed reaction is L-histidinol + 2 NAD(+) + H2O = L-histidine + 2 NADH + 3 H(+). Its pathway is amino-acid biosynthesis; L-histidine biosynthesis; L-histidine from 5-phospho-alpha-D-ribose 1-diphosphate: step 9/9. Functionally, catalyzes the sequential NAD-dependent oxidations of L-histidinol to L-histidinaldehyde and then to L-histidine. The protein is Histidinol dehydrogenase of Prochlorococcus marinus (strain MIT 9312).